The following is a 381-amino-acid chain: L-lactate dehydrogenase (381 aa).

Positions 1-380 (MIISASTDYR…TRDSLVRELG (380 aa)) constitute an FMN hydroxy acid dehydrogenase domain. Y24 contacts substrate. S106 and Q127 together coordinate FMN. Y129 contacts substrate. Residue T155 coordinates FMN. R164 is a binding site for substrate. Position 251 (K251) interacts with FMN. The active-site Proton acceptor is H275. R278 serves as a coordination point for substrate. 306–330 (DSGIRSGLDVVRMIALGADTVLIGR) lines the FMN pocket.

It belongs to the FMN-dependent alpha-hydroxy acid dehydrogenase family. Homotetramer. It depends on FMN as a cofactor.

Its subcellular location is the cell inner membrane. It carries out the reaction (S)-lactate + A = pyruvate + AH2. Catalyzes the conversion of L-lactate to pyruvate. Is coupled to the respiratory chain. In Pseudomonas entomophila (strain L48), this protein is L-lactate dehydrogenase.